A 207-amino-acid chain; its full sequence is Small ribosomal subunit protein uS4 (207 aa).

A disordered region spans residues 22 to 54; sequence KSARRSISDKSKFESKPGQHGRTSGSRTSDFGL. The span at 27–38 shows a compositional bias: basic and acidic residues; it reads SISDKSKFESKP. Positions 42–52 are enriched in polar residues; sequence GRTSGSRTSDF. Residues 97 to 157 enclose the S4 RNA-binding domain; it reads SRLDNVVYRM…EKSKKQLRII (61 aa).

Belongs to the universal ribosomal protein uS4 family. As to quaternary structure, part of the 30S ribosomal subunit. Contacts protein S5. The interaction surface between S4 and S5 is involved in control of translational fidelity.

Its function is as follows. One of the primary rRNA binding proteins, it binds directly to 16S rRNA where it nucleates assembly of the body of the 30S subunit. Functionally, with S5 and S12 plays an important role in translational accuracy. This Leptothrix cholodnii (strain ATCC 51168 / LMG 8142 / SP-6) (Leptothrix discophora (strain SP-6)) protein is Small ribosomal subunit protein uS4.